The sequence spans 390 residues: Succinate--CoA ligase [ADP-forming] subunit beta (390 aa).

In terms of domain architecture, ATP-grasp spans 9–248 (KEILRRHKAN…ITEEDPLEVQ (240 aa)). Residues Lys-50, 57–59 (GRG), Glu-103, Ile-106, and Glu-111 each bind ATP. Residues Asn-203 and Asp-217 each coordinate Mg(2+). Substrate is bound by residues Asn-268 and 325-327 (GIV).

This sequence belongs to the succinate/malate CoA ligase beta subunit family. Heterotetramer of two alpha and two beta subunits. Requires Mg(2+) as cofactor.

The enzyme catalyses succinate + ATP + CoA = succinyl-CoA + ADP + phosphate. It catalyses the reaction GTP + succinate + CoA = succinyl-CoA + GDP + phosphate. The protein operates within carbohydrate metabolism; tricarboxylic acid cycle; succinate from succinyl-CoA (ligase route): step 1/1. In terms of biological role, succinyl-CoA synthetase functions in the citric acid cycle (TCA), coupling the hydrolysis of succinyl-CoA to the synthesis of either ATP or GTP and thus represents the only step of substrate-level phosphorylation in the TCA. The beta subunit provides nucleotide specificity of the enzyme and binds the substrate succinate, while the binding sites for coenzyme A and phosphate are found in the alpha subunit. This Leptospira interrogans serogroup Icterohaemorrhagiae serovar copenhageni (strain Fiocruz L1-130) protein is Succinate--CoA ligase [ADP-forming] subunit beta.